We begin with the raw amino-acid sequence, 222 residues long: Cytidylate kinase 2 (222 aa).

7 to 15 (GPSGAGKGT) contacts ATP.

Belongs to the cytidylate kinase family. Type 1 subfamily.

It is found in the cytoplasm. It catalyses the reaction CMP + ATP = CDP + ADP. It carries out the reaction dCMP + ATP = dCDP + ADP. The chain is Cytidylate kinase 2 from Haemophilus influenzae (strain ATCC 51907 / DSM 11121 / KW20 / Rd).